Consider the following 59-residue polypeptide: MNFTKLFAIVLLAALVLLGQTEAGGLKKLGKKLEGAGKRVFKASEKALPVVVGIKAIGK.

An N-terminal signal peptide occupies residues 1–23 (MNFTKLFAIVLLAALVLLGQTEA).

This sequence belongs to the cecropin family. In terms of tissue distribution, salivary gland (at protein level).

The protein resides in the secreted. Its function is as follows. Antimicrobial peptide. Exhibits antibacterial activity against Gram-negative bacteria, such as Escherichia coli, Pseudomonas aeruginosa, Acinetobacter baumannii and Klebsiella pneumoniae. Shows no antibacterial effects against Gram-positive bacteria, such as Staphylococcus aureus, Enterococcus faecalis and Enterococcus faecium. Exhibits antiviral activity against all four dengue virus serotypes and chikungunya virus. Exhibits leishmanicidal activity. Partially neutralizes lipopolysaccharides (LPS). Exhibits anti-inflammatory properties: inhibits LPS-induced iNOS/NOS2 transcription, nitric oxide (NO) and pro-inflammatory cytokine production in mouse macrophages and human peripheral blood mononuclear cells (PBMCs); inhibits LPS-induced activation of MAPK and NF-kappa-B signaling pathways in mouse macrophages. The chain is Aedesin from Aedes aegypti (Yellowfever mosquito).